A 596-amino-acid chain; its full sequence is NADH-quinone oxidoreductase subunit C/D (596 aa).

Positions 1-186 (MTDLTAQDAA…DPFELTKAKQ (186 aa)) are NADH dehydrogenase I subunit C. The segment at 210-596 (DFMFLNLGPN…IDFVMSDVDR (387 aa)) is NADH dehydrogenase I subunit D.

This sequence in the N-terminal section; belongs to the complex I 30 kDa subunit family. In the C-terminal section; belongs to the complex I 49 kDa subunit family. In terms of assembly, NDH-1 is composed of 13 different subunits. Subunits NuoB, CD, E, F, and G constitute the peripheral sector of the complex.

It is found in the cell inner membrane. The enzyme catalyses a quinone + NADH + 5 H(+)(in) = a quinol + NAD(+) + 4 H(+)(out). NDH-1 shuttles electrons from NADH, via FMN and iron-sulfur (Fe-S) centers, to quinones in the respiratory chain. The immediate electron acceptor for the enzyme in this species is believed to be ubiquinone. Couples the redox reaction to proton translocation (for every two electrons transferred, four hydrogen ions are translocated across the cytoplasmic membrane), and thus conserves the redox energy in a proton gradient. This chain is NADH-quinone oxidoreductase subunit C/D, found in Salmonella choleraesuis (strain SC-B67).